Consider the following 467-residue polypeptide: L-seryl-tRNA(Sec) selenium transferase (467 aa).

Lys-298 bears the N6-(pyridoxal phosphate)lysine mark.

This sequence belongs to the SelA family. Pyridoxal 5'-phosphate serves as cofactor.

It is found in the cytoplasm. It catalyses the reaction L-seryl-tRNA(Sec) + selenophosphate + H(+) = L-selenocysteinyl-tRNA(Sec) + phosphate. It functions in the pathway aminoacyl-tRNA biosynthesis; selenocysteinyl-tRNA(Sec) biosynthesis; selenocysteinyl-tRNA(Sec) from L-seryl-tRNA(Sec) (bacterial route): step 1/1. Functionally, converts seryl-tRNA(Sec) to selenocysteinyl-tRNA(Sec) required for selenoprotein biosynthesis. The protein is L-seryl-tRNA(Sec) selenium transferase of Alkaliphilus oremlandii (strain OhILAs) (Clostridium oremlandii (strain OhILAs)).